A 209-amino-acid chain; its full sequence is Bcl-2 homologous antagonist/killer (209 aa).

Positions 1 to 28 (MASGQGPGPPKVGCDESPSPSEQQVAQD) are disordered. Ala2 is modified (N-acetylalanine). A compositionally biased stretch (polar residues) spans 18–27 (PSPSEQQVAQ). The BH3 motif lies at 72–86 (VGRQLALIGDDINRR). The BH1 signature appears at 115 to 134 (SLFKSGISWGRVVALLGFGY). Zn(2+) is bound by residues Asp158 and His162. The BH2 motif lies at 167-182 (RWIAQRGGWVAALNFR). Residues 186 to 203 (ILTVMVIFGVVLLGQFVV) form a helical membrane-spanning segment.

It belongs to the Bcl-2 family. As to quaternary structure, homodimer. Formation of the homodimer is zinc-dependent. Forms heterodimers with BCL2 and BCL2L1 isoform Bcl-X(L). Forms heterooligomers with BAX. Interacts with BCL2A1. Interacts withRTL10/BOP. Interacts with VDAC1. Interacts with GIMAP3/IAN4 and GIMAP5/IAN5. (Microbial infection) Interacts with gamma-herpesvirus 68 protein vBCL2. In terms of tissue distribution, widely expressed.

Its subcellular location is the mitochondrion outer membrane. In the presence of an appropriate stimulus, accelerates programmed cell death by binding to, and antagonizing the anti-apoptotic action of BCL2. This Mus musculus (Mouse) protein is Bcl-2 homologous antagonist/killer (Bak1).